Here is a 248-residue protein sequence, read N- to C-terminus: Ubiquinone biosynthesis O-methyltransferase (248 aa).

Positions 40, 71, 92, and 135 each coordinate S-adenosyl-L-methionine.

It belongs to the methyltransferase superfamily. UbiG/COQ3 family.

It catalyses the reaction a 3-demethylubiquinol + S-adenosyl-L-methionine = a ubiquinol + S-adenosyl-L-homocysteine + H(+). It carries out the reaction a 3-(all-trans-polyprenyl)benzene-1,2-diol + S-adenosyl-L-methionine = a 2-methoxy-6-(all-trans-polyprenyl)phenol + S-adenosyl-L-homocysteine + H(+). It participates in cofactor biosynthesis; ubiquinone biosynthesis. In terms of biological role, O-methyltransferase that catalyzes the 2 O-methylation steps in the ubiquinone biosynthetic pathway. The protein is Ubiquinone biosynthesis O-methyltransferase of Dinoroseobacter shibae (strain DSM 16493 / NCIMB 14021 / DFL 12).